We begin with the raw amino-acid sequence, 186 residues long: Threonylcarbamoyl-AMP synthase (186 aa).

A YrdC-like domain is found at 2-186 (STEFEQAVAA…ARTGAVIRPS (185 aa)).

The protein belongs to the SUA5 family. TsaC subfamily.

It is found in the cytoplasm. It catalyses the reaction L-threonine + hydrogencarbonate + ATP = L-threonylcarbamoyladenylate + diphosphate + H2O. Required for the formation of a threonylcarbamoyl group on adenosine at position 37 (t(6)A37) in tRNAs that read codons beginning with adenine. Catalyzes the conversion of L-threonine, HCO(3)(-)/CO(2) and ATP to give threonylcarbamoyl-AMP (TC-AMP) as the acyladenylate intermediate, with the release of diphosphate. This is Threonylcarbamoyl-AMP synthase from Aeromonas salmonicida (strain A449).